The primary structure comprises 351 residues: Nicotinate-nucleotide--dimethylbenzimidazole phosphoribosyltransferase (351 aa).

Catalysis depends on Glu-317, which acts as the Proton acceptor.

This sequence belongs to the CobT family.

It catalyses the reaction 5,6-dimethylbenzimidazole + nicotinate beta-D-ribonucleotide = alpha-ribazole 5'-phosphate + nicotinate + H(+). Its pathway is nucleoside biosynthesis; alpha-ribazole biosynthesis; alpha-ribazole from 5,6-dimethylbenzimidazole: step 1/2. Its function is as follows. Catalyzes the synthesis of alpha-ribazole-5'-phosphate from nicotinate mononucleotide (NAMN) and 5,6-dimethylbenzimidazole (DMB). This is Nicotinate-nucleotide--dimethylbenzimidazole phosphoribosyltransferase from Ectopseudomonas mendocina (strain ymp) (Pseudomonas mendocina).